The sequence spans 290 residues: PIH1 domain-containing protein 1 (290 aa).

2 positions are modified to phosphoserine: Ser-12 and Ser-173.

This sequence belongs to the PIH1 family. In terms of assembly, component of the R2TP complex composed at least of RUVBL1, RUVBL2, RPAP3 and PIHD1. Component of the PAQosome complex which is responsible for the biogenesis of several protein complexes and which consists of R2TP complex members RUVBL1, RUVBL2, RPAP3 and PIH1D1, URI complex members PFDN2, PFDN6, PDRG1, UXT and URI1 as well as ASDURF, POLR2E and DNAAF10/WDR92. Interacts with phosphorylated TELO2 and mediates interaction of TELO2 with the R2TP complex. Interacts with phosphorylated ECD, EFTUD2/SNRP116, RPB1 and UBR5 and with RPB1 in a phosphorylation-independent manner. Interacts with the core C/D box snoRNP particle components NOP58 and FBL and with RUVBL1/TIP49. Interacts with RPAP3 and DNAAF10. Interacts with histone H4 and with SWI/SNF complex member SMARCB1/SNF5. Interacts with the mTORC1 complex member RPTOR. Interacts with MSL1. In terms of tissue distribution, expressed at low levels in normal mammary epithelial cells (at protein level). Highest expression in lung, leukocyte and placenta. Expressed at lower levels in brain, prostate, colon, heart, small intestine, liver, ovary, pancreas, skeletal muscle, spleen, testis and thymus.

Its subcellular location is the nucleus. Functionally, involved in the assembly of C/D box small nucleolar ribonucleoprotein (snoRNP) particles. Recruits the SWI/SNF complex to the core promoter of rRNA genes and enhances pre-rRNA transcription. Mediates interaction of TELO2 with the R2TP complex which is necessary for the stability of MTOR and SMG1. Positively regulates the assembly and activity of the mTORC1 complex. This Homo sapiens (Human) protein is PIH1 domain-containing protein 1 (PIH1D1).